Reading from the N-terminus, the 341-residue chain is UDP-3-O-acylglucosamine N-acyltransferase 2 (341 aa).

His-254 functions as the Proton acceptor in the catalytic mechanism.

Belongs to the transferase hexapeptide repeat family. LpxD subfamily. As to quaternary structure, homotrimer.

The catalysed reaction is a UDP-3-O-[(3R)-3-hydroxyacyl]-alpha-D-glucosamine + a (3R)-hydroxyacyl-[ACP] = a UDP-2-N,3-O-bis[(3R)-3-hydroxyacyl]-alpha-D-glucosamine + holo-[ACP] + H(+). It functions in the pathway bacterial outer membrane biogenesis; LPS lipid A biosynthesis. In terms of biological role, catalyzes the N-acylation of UDP-3-O-acylglucosamine using 3-hydroxyacyl-ACP as the acyl donor. Is involved in the biosynthesis of lipid A, a phosphorylated glycolipid that anchors the lipopolysaccharide to the outer membrane of the cell. The chain is UDP-3-O-acylglucosamine N-acyltransferase 2 from Nitrobacter winogradskyi (strain ATCC 25391 / DSM 10237 / CIP 104748 / NCIMB 11846 / Nb-255).